The following is a 360-amino-acid chain: Phosphate acyltransferase (360 aa).

Belongs to the PlsX family. As to quaternary structure, homodimer. Probably interacts with PlsY.

It is found in the cytoplasm. It catalyses the reaction a fatty acyl-[ACP] + phosphate = an acyl phosphate + holo-[ACP]. The protein operates within lipid metabolism; phospholipid metabolism. Functionally, catalyzes the reversible formation of acyl-phosphate (acyl-PO(4)) from acyl-[acyl-carrier-protein] (acyl-ACP). This enzyme utilizes acyl-ACP as fatty acyl donor, but not acyl-CoA. The chain is Phosphate acyltransferase from Janthinobacterium sp. (strain Marseille) (Minibacterium massiliensis).